Here is a 338-residue protein sequence, read N- to C-terminus: Adenylosuccinate synthetase (338 aa).

Residues 12 to 18 (GDEGKGK) and 42 to 44 (GHT) each bind GTP. The active-site Proton acceptor is aspartate 13. Residues aspartate 13 and glycine 42 each coordinate Mg(2+). IMP-binding positions include 13-16 (DEGK), 40-43 (NAGH), threonine 127, arginine 141, glutamine 179, threonine 194, and arginine 256. Histidine 43 serves as the catalytic Proton donor. 252-258 (TVTGRRR) is a substrate binding site. GTP is bound by residues arginine 258, 284–286 (CLD), and 324–326 (STG).

The protein belongs to the adenylosuccinate synthetase family. As to quaternary structure, homodimer. It depends on Mg(2+) as a cofactor.

It is found in the cytoplasm. It catalyses the reaction IMP + L-aspartate + GTP = N(6)-(1,2-dicarboxyethyl)-AMP + GDP + phosphate + 2 H(+). The protein operates within purine metabolism; AMP biosynthesis via de novo pathway; AMP from IMP: step 1/2. Its function is as follows. Plays an important role in the de novo pathway of purine nucleotide biosynthesis. Catalyzes the first committed step in the biosynthesis of AMP from IMP. This is Adenylosuccinate synthetase from Methanococcus vannielii (strain ATCC 35089 / DSM 1224 / JCM 13029 / OCM 148 / SB).